Consider the following 84-residue polypeptide: MASTEGEHNAGVDPAEVPSVAWGWSRINHHTWHIVGLFAIGLLLAMLRGNHIGHVENWYLIGFAALVFFVLIRDLLGRRRGWIR.

A run of 2 helical transmembrane segments spans residues 27–47 (INHHTWHIVGLFAIGLLLAML) and 52–72 (IGHVENWYLIGFAALVFFVLI).

This sequence to M.tuberculosis Rv2876.

The protein resides in the cell membrane. This is an uncharacterized protein from Mycobacterium leprae (strain TN).